The following is a 225-amino-acid chain: MNKRLVVKNLGRQDYEPVWKAMHTFTDERDENTCDEVWLVEHNPVFTQGQAGKEEHVLAAGDIPIVKSDRGGQVTYHGPGQLVAYVLINLRRKNIGVRELVTHIENTVINTLSHFNVESAARPDAPGVYVDNKKICSLGLRIRKGCSFHGLALNINMDLSPFLRINPCGYAGMEMIQLHDLVKDNMTVENKAEHVEDVHPLLIKELTTLLDYTDIEYLTESSNHE.

The BPL/LPL catalytic domain maps to 31–214 (ENTCDEVWLV…ELTTLLDYTD (184 aa)). Residues 70 to 77 (RGGQVTYH), 137 to 139 (SLG), and 150 to 152 (GLA) contribute to the substrate site. Cysteine 168 (acyl-thioester intermediate) is an active-site residue.

It belongs to the LipB family.

The protein localises to the cytoplasm. The catalysed reaction is octanoyl-[ACP] + L-lysyl-[protein] = N(6)-octanoyl-L-lysyl-[protein] + holo-[ACP] + H(+). It functions in the pathway protein modification; protein lipoylation via endogenous pathway; protein N(6)-(lipoyl)lysine from octanoyl-[acyl-carrier-protein]: step 1/2. Its function is as follows. Catalyzes the transfer of endogenously produced octanoic acid from octanoyl-acyl-carrier-protein onto the lipoyl domains of lipoate-dependent enzymes. Lipoyl-ACP can also act as a substrate although octanoyl-ACP is likely to be the physiological substrate. The sequence is that of Octanoyltransferase from Aliivibrio fischeri (strain ATCC 700601 / ES114) (Vibrio fischeri).